The primary structure comprises 279 residues: D-aminoacyl-tRNA deacylase (279 aa).

Positions Gly81–Gly100 are disordered.

The protein belongs to the DtdA deacylase family. In terms of assembly, monomer. Requires Zn(2+) as cofactor.

It catalyses the reaction a D-aminoacyl-tRNA + H2O = a tRNA + a D-alpha-amino acid + H(+). The enzyme catalyses glycyl-tRNA(Ala) + H2O = tRNA(Ala) + glycine + H(+). Its function is as follows. D-aminoacyl-tRNA deacylase with broad substrate specificity. By recycling D-aminoacyl-tRNA to D-amino acids and free tRNA molecules, this enzyme counteracts the toxicity associated with the formation of D-aminoacyl-tRNA entities in vivo. This chain is D-aminoacyl-tRNA deacylase, found in Aeropyrum pernix (strain ATCC 700893 / DSM 11879 / JCM 9820 / NBRC 100138 / K1).